An 83-amino-acid chain; its full sequence is Small ribosomal subunit protein uS17 (83 aa).

The protein belongs to the universal ribosomal protein uS17 family. As to quaternary structure, part of the 30S ribosomal subunit.

Functionally, one of the primary rRNA binding proteins, it binds specifically to the 5'-end of 16S ribosomal RNA. This is Small ribosomal subunit protein uS17 from Gloeobacter violaceus (strain ATCC 29082 / PCC 7421).